A 298-amino-acid polypeptide reads, in one-letter code: Cholesterol 25-hydroxylase (298 aa).

Residue Asn-5 is glycosylated (N-linked (GlcNAc...) asparagine). Transmembrane regions (helical) follow at residues 38–58 (IFPVTFSIITYVGFCLPFVVL), 88–108 (LGLTLYQHLVFVFPVTLLHWV), and 124–144 (LLSHVLICLLLFDTEIFAWHL). One can recognise a Fatty acid hydroxylase domain in the interval 128-263 (VLICLLLFDT…FTHWDKMLGT (136 aa)). Positions 142–146 (WHLLH) match the Histidine box-1 motif. The Histidine box-2 motif lies at 157–161 (HKVHH). Residue Asn-163 is glycosylated (N-linked (GlcNAc...) asparagine). The Histidine box-3 motif lies at 238-244 (HHDMHHS).

This sequence belongs to the sterol desaturase family. It depends on Fe cation as a cofactor. Post-translationally, N-glycosylated. As to expression, widely expressed at low level and at higher level in the lung. Weakly expressed in the heart, lung and kidney.

It is found in the endoplasmic reticulum membrane. The enzyme catalyses cholesterol + AH2 + O2 = 25-hydroxycholesterol + A + H2O. The catalysed reaction is cholesterol + NADPH + O2 + H(+) = 25-hydroxycholesterol + NADP(+) + H2O. Its function is as follows. Catalyzes the formation of 25-hydroxycholesterol from cholesterol, leading to repress cholesterol biosynthetic enzymes. Plays a key role in cell positioning and movement in lymphoid tissues: 25-hydroxycholesterol is an intermediate in biosynthesis of 7-alpha,25-dihydroxycholesterol (7-alpha,25-OHC), an oxysterol that acts as a ligand for the G protein-coupled receptor GPR183/EBI2, a chemotactic receptor for a number of lymphoid cells. May play an important role in regulating lipid metabolism by synthesizing a corepressor that blocks sterol regulatory element binding protein (SREBP) processing. In testis, production of 25-hydroxycholesterol by macrophages may play a role in Leydig cell differentiation. Required to restrain inflammation in macrophages: production of 25-hydroxycholesterol protects macrophages from cholesterol overload, thereby preventing mitochondrial DNA release and subsequent activation of the AIM2 inflammasome. Interferon-stimulated gene which has broad antiviral activities against a wide range of enveloped viruses. The chain is Cholesterol 25-hydroxylase from Mus musculus (Mouse).